A 182-amino-acid chain; its full sequence is Peptidoglycan-recognition protein SB2 (182 aa).

Residues 1–17 (MKLQLALVLCGLTLALG) form the signal peptide. The 126-residue stretch at 40-165 (PVRLIIIHHT…CQTKATACPG (126 aa)) folds into the N-acetylmuramoyl-L-alanine amidase domain. Histidine 47 contributes to the Zn(2+) binding site. Cysteine 54 and cysteine 60 are joined by a disulfide. Asparagine 149 carries N-linked (GlcNAc...) asparagine glycosylation. Zn(2+) is bound by residues histidine 155 and cysteine 163.

The protein belongs to the N-acetylmuramoyl-L-alanine amidase 2 family. Zn(2+) is required as a cofactor.

It localises to the secreted. The enzyme catalyses Hydrolyzes the link between N-acetylmuramoyl residues and L-amino acid residues in certain cell-wall glycopeptides.. In terms of biological role, N-acetylmuramyl-L-alanine amidase involved in innate immunity by degrading bacterial peptidoglycans (PGN). Probably plays a scavenger role by digesting biologically active PGN into biologically inactive fragments. Has no direct bacteriolytic activity. This Drosophila simulans (Fruit fly) protein is Peptidoglycan-recognition protein SB2 (PGRP-SB2).